Here is a 416-residue protein sequence, read N- to C-terminus: CinA-like protein (416 aa).

The protein belongs to the CinA family.

The polypeptide is CinA-like protein (Amoebophilus asiaticus (strain 5a2)).